The following is an 89-amino-acid chain: UPF0237 protein CA_C0478 (89 aa).

The 75-residue stretch at 4–78 folds into the ACT domain; it reads IITVIGKDKV…KKLGVSIKIQ (75 aa).

Belongs to the UPF0237 family.

This Clostridium acetobutylicum (strain ATCC 824 / DSM 792 / JCM 1419 / IAM 19013 / LMG 5710 / NBRC 13948 / NRRL B-527 / VKM B-1787 / 2291 / W) protein is UPF0237 protein CA_C0478.